A 493-amino-acid polypeptide reads, in one-letter code: 3-octaprenyl-4-hydroxybenzoate carboxy-lyase (493 aa).

Asn175 is a binding site for Mn(2+). Prenylated FMN-binding positions include 178 to 180 (IYR), 192 to 194 (RWL), and 197 to 198 (RG). Position 241 (Glu241) interacts with Mn(2+). Catalysis depends on Asp290, which acts as the Proton donor.

Belongs to the UbiD family. As to quaternary structure, homohexamer. The cofactor is prenylated FMN. Requires Mn(2+) as cofactor.

The protein resides in the cell membrane. The enzyme catalyses a 4-hydroxy-3-(all-trans-polyprenyl)benzoate + H(+) = a 2-(all-trans-polyprenyl)phenol + CO2. It functions in the pathway cofactor biosynthesis; ubiquinone biosynthesis. Catalyzes the decarboxylation of 3-octaprenyl-4-hydroxy benzoate to 2-octaprenylphenol, an intermediate step in ubiquinone biosynthesis. This is 3-octaprenyl-4-hydroxybenzoate carboxy-lyase from Photorhabdus laumondii subsp. laumondii (strain DSM 15139 / CIP 105565 / TT01) (Photorhabdus luminescens subsp. laumondii).